The sequence spans 449 residues: Na(+)-translocating NADH-quinone reductase subunit A (449 aa).

Belongs to the NqrA family. As to quaternary structure, composed of six subunits; NqrA, NqrB, NqrC, NqrD, NqrE and NqrF.

It carries out the reaction a ubiquinone + n Na(+)(in) + NADH + H(+) = a ubiquinol + n Na(+)(out) + NAD(+). In terms of biological role, NQR complex catalyzes the reduction of ubiquinone-1 to ubiquinol by two successive reactions, coupled with the transport of Na(+) ions from the cytoplasm to the periplasm. NqrA to NqrE are probably involved in the second step, the conversion of ubisemiquinone to ubiquinol. The chain is Na(+)-translocating NADH-quinone reductase subunit A from Actinobacillus pleuropneumoniae serotype 5b (strain L20).